Reading from the N-terminus, the 368-residue chain is Multifunctional CCA protein (368 aa).

Residues Gly8 and Arg11 each contribute to the ATP site. CTP-binding residues include Gly8 and Arg11. 2 residues coordinate Mg(2+): Asp21 and Asp23. ATP is bound by residues Arg91, Arg137, and Arg140. CTP is bound by residues Arg91, Arg137, and Arg140.

This sequence belongs to the tRNA nucleotidyltransferase/poly(A) polymerase family. Bacterial CCA-adding enzyme type 1 subfamily. In terms of assembly, monomer. Can also form homodimers and oligomers. Mg(2+) is required as a cofactor. Requires Ni(2+) as cofactor.

It catalyses the reaction a tRNA precursor + 2 CTP + ATP = a tRNA with a 3' CCA end + 3 diphosphate. The catalysed reaction is a tRNA with a 3' CCA end + 2 CTP + ATP = a tRNA with a 3' CCACCA end + 3 diphosphate. Catalyzes the addition and repair of the essential 3'-terminal CCA sequence in tRNAs without using a nucleic acid template. Adds these three nucleotides in the order of C, C, and A to the tRNA nucleotide-73, using CTP and ATP as substrates and producing inorganic pyrophosphate. tRNA 3'-terminal CCA addition is required both for tRNA processing and repair. Also involved in tRNA surveillance by mediating tandem CCA addition to generate a CCACCA at the 3' terminus of unstable tRNAs. While stable tRNAs receive only 3'-terminal CCA, unstable tRNAs are marked with CCACCA and rapidly degraded. The sequence is that of Multifunctional CCA protein from Pseudomonas putida (strain ATCC 47054 / DSM 6125 / CFBP 8728 / NCIMB 11950 / KT2440).